A 177-amino-acid polypeptide reads, in one-letter code: MSRVAKAPVVVPAGVDVKINGQVITIKGKNGELTRTLNDAVEVKHADNALTFGPRDGYADGWAQAGTARALLNSMVIGVTEGFTKKLQLVGVGYRAAVKGNVVNLSLGFSHPVDHQLPAGITAECPTQTEIVLKGADKQVIGQVAADLRAYRRPEPYKGKGVRYADEVVRTKEAKKK.

The protein belongs to the universal ribosomal protein uL6 family. In terms of assembly, part of the 50S ribosomal subunit.

Its function is as follows. This protein binds to the 23S rRNA, and is important in its secondary structure. It is located near the subunit interface in the base of the L7/L12 stalk, and near the tRNA binding site of the peptidyltransferase center. In Salmonella newport (strain SL254), this protein is Large ribosomal subunit protein uL6.